We begin with the raw amino-acid sequence, 229 residues long: Lytic polysaccharide monooxygenase-like protein ham-7 (229 aa).

The first 17 residues, 1 to 17 (MLTSTLLALASAALASA), serve as a signal peptide directing secretion. Cu(2+) is bound at residue His-18. Disulfide bonds link Cys-47-Cys-157 and Cys-122-Cys-178. N-linked (GlcNAc...) asparagine glycosylation is found at Asn-55, Asn-98, Asn-139, Asn-174, and Asn-180. A lipid anchor (GPI-anchor amidated serine) is attached at Ser-206. The propeptide at 207–229 (AAASLARMAGWVPLVAGGLWLML) is removed in mature form.

Belongs to the X325 family. The cofactor is Cu(2+).

The protein localises to the cell membrane. Lytic polysaccharide monooxygenase-like protein that has diverged to biological functions other than polysaccharide degradation since it does not perform oxidative cleavage of polysaccharides. Acts as the major cell wall sensor that regulates MAK-1-dependent hyphal anastomosis, the fusion of hyphal cells. May also act as a cell surface-bound protein that functions in the copper-accumulation pathway. In Neurospora crassa (strain ATCC 24698 / 74-OR23-1A / CBS 708.71 / DSM 1257 / FGSC 987), this protein is Lytic polysaccharide monooxygenase-like protein ham-7.